We begin with the raw amino-acid sequence, 78 residues long: Translation initiation factor IF-1 (78 aa).

The 72-residue stretch at 1–72 folds into the S1-like domain; it reads MAKEAEMEFE…TRGRITYRKI (72 aa).

Belongs to the IF-1 family. As to quaternary structure, component of the 30S ribosomal translation pre-initiation complex which assembles on the 30S ribosome in the order IF-2 and IF-3, IF-1 and N-formylmethionyl-tRNA(fMet); mRNA recruitment can occur at any time during PIC assembly.

Its subcellular location is the cytoplasm. One of the essential components for the initiation of protein synthesis. Stabilizes the binding of IF-2 and IF-3 on the 30S subunit to which N-formylmethionyl-tRNA(fMet) subsequently binds. Helps modulate mRNA selection, yielding the 30S pre-initiation complex (PIC). Upon addition of the 50S ribosomal subunit IF-1, IF-2 and IF-3 are released leaving the mature 70S translation initiation complex. The protein is Translation initiation factor IF-1 of Mesoplasma florum (strain ATCC 33453 / NBRC 100688 / NCTC 11704 / L1) (Acholeplasma florum).